The sequence spans 242 residues: uncharacterized protein (242 aa).

Positions 17 to 85 constitute an HTH gntR-type domain; that stretch reads QRVDERIATT…HGSGSVVRDP (69 aa). The H-T-H motif DNA-binding region spans 45–64; that stretch reads ERDLAERLGVNRTSLRQGLA.

This is an uncharacterized protein from Mycobacterium tuberculosis (strain ATCC 25618 / H37Rv).